The primary structure comprises 454 residues: Allantoinase (454 aa).

Histidine 60, histidine 62, lysine 147, histidine 183, histidine 239, and aspartate 312 together coordinate Zn(2+). Position 147 is an N6-carboxylysine (lysine 147).

The protein belongs to the metallo-dependent hydrolases superfamily. Allantoinase family. As to quaternary structure, homotetramer. Requires Zn(2+) as cofactor. In terms of processing, carboxylation allows a single lysine to coordinate two zinc ions.

The catalysed reaction is (S)-allantoin + H2O = allantoate + H(+). It participates in nitrogen metabolism; (S)-allantoin degradation; allantoate from (S)-allantoin: step 1/1. Functionally, catalyzes the conversion of allantoin (5-ureidohydantoin) to allantoic acid by hydrolytic cleavage of the five-member hydantoin ring. The protein is Allantoinase of Bacillus velezensis (strain DSM 23117 / BGSC 10A6 / LMG 26770 / FZB42) (Bacillus amyloliquefaciens subsp. plantarum).